An 85-amino-acid chain; its full sequence is Small ribosomal subunit protein bS16 (85 aa).

It belongs to the bacterial ribosomal protein bS16 family.

In Pseudomonas syringae pv. tomato (strain ATCC BAA-871 / DC3000), this protein is Small ribosomal subunit protein bS16.